Reading from the N-terminus, the 452-residue chain is Phenylalanine-4-hydroxylase (452 aa).

Position 16 is a phosphoserine; by PKA (Ser-16). The 79-residue stretch at 36–114 (SLIFSLKEEV…TVHELSRDKK (79 aa)) folds into the ACT domain. Fe cation contacts are provided by His-285, His-290, and Glu-330.

The protein belongs to the biopterin-dependent aromatic amino acid hydroxylase family. In terms of assembly, homodimer and homotetramer. Requires Fe(2+) as cofactor. Phosphorylation at Ser-16 increases basal activity and facilitates activation by the substrate phenylalanine.

The enzyme catalyses (6R)-L-erythro-5,6,7,8-tetrahydrobiopterin + L-phenylalanine + O2 = (4aS,6R)-4a-hydroxy-L-erythro-5,6,7,8-tetrahydrobiopterin + L-tyrosine. The protein operates within amino-acid degradation; L-phenylalanine degradation; acetoacetate and fumarate from L-phenylalanine: step 1/6. With respect to regulation, N-terminal region of PAH is thought to contain allosteric binding sites for phenylalanine and to constitute an 'inhibitory' domain that regulates the activity of a catalytic domain in the C-terminal portion of the molecule. Functionally, catalyzes the hydroxylation of L-phenylalanine to L-tyrosine. This Homo sapiens (Human) protein is Phenylalanine-4-hydroxylase (PAH).